A 527-amino-acid chain; its full sequence is MVSIVVHKPSFSYPSVSSSSMKKKPRHHQQLKQHRQNQYNNNGFTSLSFTKPSPTPLLIEKQSIHRTQLEALDSVITDLETSAQKGISLTEPEIFASLLETCYSLRAIDHGVRVHHLIPPYLLRNNLGISSKLVRLYASCGYAEVAHEVFDRMSKRDSSPFAWNSLISGYAELGQYEDAMALYFQMAEDGVKPDRFTFPRVLKACGGIGSVQIGEAIHRDLVKEGFGYDVYVLNALVVMYAKCGDIVKARNVFDMIPHKDYVSWNSMLTGYLHHGLLHEALDIFRLMVQNGIEPDKVAISSVLARVLSFKHGRQLHGWVIRRGMEWELSVANALIVLYSKRGQLGQACFIFDQMLERDTVSWNAIISAHSKNSNGLKYFEQMHRANAKPDGITFVSVLSLCANTGMVEDGERLFSLMSKEYGIDPKMEHYACMVNLYGRAGMMEEAYSMIVQEMGLEAGPTVWGALLYACYLHGNTDIGEVAAQRLFELEPDNEHNFELLIRIYSKAKRAEDVERVRQMMVDRGLET.

A chloroplast-targeting transit peptide spans 1–47 (MVSIVVHKPSFSYPSVSSSSMKKKPRHHQQLKQHRQNQYNNNGFTSL). The disordered stretch occupies residues 12 to 44 (SYPSVSSSSMKKKPRHHQQLKQHRQNQYNNNGF). Basic residues predominate over residues 21 to 35 (MKKKPRHHQQLKQHR). PPR repeat units lie at residues 126–156 (NLGISSKLVRLYASCGYAEVAHEVFDRMSKR), 159–193 (SPFAWNSLISGYAELGQYEDAMALYFQMAEDGVKP), 194–228 (DRFTFPRVLKACGGIGSVQIGEAIHRDLVKEGFGY), 229–259 (DVYVLNALVVMYAKCGDIVKARNVFDMIPHK), 260–294 (DYVSWNSMLTGYLHHGLLHEALDIFRLMVQNGIEP), 295–326 (DKVAISSVLARVLSFKHGRQLHGWVIRRGMEW), 327–361 (ELSVANALIVLYSKRGQLGQACFIFDQMLERDTVS), 367–389 (SAHSKNSNGLKYFEQMHRANAKP), 390–425 (DGITFVSVLSLCANTGMVEDGERLFSLMSKEYGIDP), and 426–457 (KMEHYACMVNLYGRAGMMEEAYSMIVQEMGLE). Positions 462-527 (VWGALLYACY…QMMVDRGLET (66 aa)) are type E motif; degenerate.

Belongs to the PPR family. PCMP-E subfamily.

The protein localises to the plastid. It is found in the chloroplast. The protein is Pentatricopeptide repeat-containing protein At4g25270, chloroplastic (PCMP-E53) of Arabidopsis thaliana (Mouse-ear cress).